The primary structure comprises 335 residues: Ketol-acid reductoisomerase (NADP(+)) (335 aa).

The KARI N-terminal Rossmann domain occupies 1 to 182 (MATIIYDNET…GATRAGVYET (182 aa)). NADP(+)-binding positions include 25 to 28 (YGSQ), Arg48, Ser51, Ser53, and 83 to 86 (DEKQ). Residue His108 is part of the active site. Gly134 contributes to the NADP(+) binding site. The 146-residue stretch at 183–328 (TFREETETDL…KEIRANIPWL (146 aa)) folds into the KARI C-terminal knotted domain. Mg(2+)-binding residues include Asp191, Glu195, Glu227, and Glu231. A substrate-binding site is contributed by Ser252.

This sequence belongs to the ketol-acid reductoisomerase family. Requires Mg(2+) as cofactor.

It carries out the reaction (2R)-2,3-dihydroxy-3-methylbutanoate + NADP(+) = (2S)-2-acetolactate + NADPH + H(+). The catalysed reaction is (2R,3R)-2,3-dihydroxy-3-methylpentanoate + NADP(+) = (S)-2-ethyl-2-hydroxy-3-oxobutanoate + NADPH + H(+). It participates in amino-acid biosynthesis; L-isoleucine biosynthesis; L-isoleucine from 2-oxobutanoate: step 2/4. Its pathway is amino-acid biosynthesis; L-valine biosynthesis; L-valine from pyruvate: step 2/4. Functionally, involved in the biosynthesis of branched-chain amino acids (BCAA). Catalyzes an alkyl-migration followed by a ketol-acid reduction of (S)-2-acetolactate (S2AL) to yield (R)-2,3-dihydroxy-isovalerate. In the isomerase reaction, S2AL is rearranged via a Mg-dependent methyl migration to produce 3-hydroxy-3-methyl-2-ketobutyrate (HMKB). In the reductase reaction, this 2-ketoacid undergoes a metal-dependent reduction by NADPH to yield (R)-2,3-dihydroxy-isovalerate. The chain is Ketol-acid reductoisomerase (NADP(+)) from Methanosarcina acetivorans (strain ATCC 35395 / DSM 2834 / JCM 12185 / C2A).